A 395-amino-acid polypeptide reads, in one-letter code: Levanbiose-producing levanase (395 aa).

The active site involves Asp-1. Substrate is bound by residues 59–60 (WT), 124–125 (RD), Glu-173, and Trp-261.

It belongs to the glycosyl hydrolase 32 family.

It is found in the membrane. The enzyme catalyses Hydrolysis of (2-&gt;6)-beta-D-fructofuranan, to remove successive disaccharide residues as levanbiose, i.e. 6-(beta-D-fructofuranosyl)-D-fructose, from the end of the chain.. Its function is as follows. Catalyzes the degradation of levan mainly into levanbiose (difructose). Can also hydrolyze inulin. This chain is Levanbiose-producing levanase (levB), found in Geobacillus stearothermophilus (Bacillus stearothermophilus).